The sequence spans 524 residues: GMP synthase [glutamine-hydrolyzing] (524 aa).

The Glutamine amidotransferase type-1 domain occupies 8 to 206 (KILILDFGSQ…VRKLCQCEAR (199 aa)). Cys85 functions as the Nucleophile in the catalytic mechanism. Active-site residues include His180 and Glu182. One can recognise a GMPS ATP-PPase domain in the interval 207-399 (WTTGNIVEDA…LGLPYEMVYR (193 aa)). 234 to 240 (SGGVDSS) contributes to the ATP binding site.

In terms of assembly, homodimer.

It catalyses the reaction XMP + L-glutamine + ATP + H2O = GMP + L-glutamate + AMP + diphosphate + 2 H(+). It functions in the pathway purine metabolism; GMP biosynthesis; GMP from XMP (L-Gln route): step 1/1. Functionally, catalyzes the synthesis of GMP from XMP. This chain is GMP synthase [glutamine-hydrolyzing], found in Methylococcus capsulatus (strain ATCC 33009 / NCIMB 11132 / Bath).